Reading from the N-terminus, the 479-residue chain is Adenosylhomocysteinase (479 aa).

T66, D142, and E203 together coordinate substrate. 204-206 (TTT) is an NAD(+) binding site. Residues K233 and D237 each contribute to the substrate site. NAD(+)-binding positions include N238, 267–272 (GYGDVG), E290, N325, 346–348 (IGH), and N394.

This sequence belongs to the adenosylhomocysteinase family. Requires NAD(+) as cofactor.

It is found in the cytoplasm. It carries out the reaction S-adenosyl-L-homocysteine + H2O = L-homocysteine + adenosine. The protein operates within amino-acid biosynthesis; L-homocysteine biosynthesis; L-homocysteine from S-adenosyl-L-homocysteine: step 1/1. Functionally, may play a key role in the regulation of the intracellular concentration of adenosylhomocysteine. The sequence is that of Adenosylhomocysteinase from Oleidesulfovibrio alaskensis (strain ATCC BAA-1058 / DSM 17464 / G20) (Desulfovibrio alaskensis).